A 248-amino-acid chain; its full sequence is Protein FAM133A (248 aa).

Residues 68 to 80 show a composition bias toward basic and acidic residues; sequence NWKKELEKSREKL. The disordered stretch occupies residues 68–248; sequence NWKKELEKSR…KKSGSSHKSR (181 aa). Positions 90–102 are enriched in basic residues; that stretch reads KRERKKKRKKKSC. Positions 103 to 118 are enriched in low complexity; the sequence is RSSSSSSSSDSSSSSS. Basic residues predominate over residues 127-138; the sequence is QGKRRKKKKNRS. Basic and acidic residues-rich tracts occupy residues 147–156, 163–175, and 211–220; these read HESESESKES, SKDETEKEKDVRS, and RCEEREQAKE. Basic residues predominate over residues 221-248; sequence KVKKKKKKQHKKHSKKKKKKSGSSHKSR.

It belongs to the FAM133 family.

The chain is Protein FAM133A (FAM133A) from Homo sapiens (Human).